The primary structure comprises 169 residues: Putative hydrogenase maturation protease MJ0631 (169 aa).

The protein belongs to the peptidase A31 family.

This is Putative hydrogenase maturation protease MJ0631 from Methanocaldococcus jannaschii (strain ATCC 43067 / DSM 2661 / JAL-1 / JCM 10045 / NBRC 100440) (Methanococcus jannaschii).